Here is a 201-residue protein sequence, read N- to C-terminus: Peptide deformylase (201 aa).

Fe cation contacts are provided by cysteine 121 and histidine 163. Glutamate 164 is an active-site residue. Fe cation is bound at residue histidine 167.

The protein belongs to the polypeptide deformylase family. Fe(2+) is required as a cofactor.

It carries out the reaction N-terminal N-formyl-L-methionyl-[peptide] + H2O = N-terminal L-methionyl-[peptide] + formate. Functionally, removes the formyl group from the N-terminal Met of newly synthesized proteins. Requires at least a dipeptide for an efficient rate of reaction. N-terminal L-methionine is a prerequisite for activity but the enzyme has broad specificity at other positions. In Synechococcus sp. (strain CC9605), this protein is Peptide deformylase.